Reading from the N-terminus, the 70-residue chain is SPbeta prophage-derived uncharacterized HTH-type transcriptional regulator YopO (70 aa).

The HTH cro/C1-type domain occupies 5–59; sequence IKQLMVKRGITIEELSRETMIDMQTLNKIIEMPDESDVTTIKLIALVLNVSIDEL. Positions 16-35 form a DNA-binding region, H-T-H motif; that stretch reads IEELSRETMIDMQTLNKIIE.

The sequence is that of SPbeta prophage-derived uncharacterized HTH-type transcriptional regulator YopO (yopO) from Bacillus subtilis (strain 168).